The following is a 2185-amino-acid chain: Genome polyprotein (2185 aa).

Gly-2 carries the N-myristoyl glycine; by host lipid modification. Residues 2–1495 are Cytoplasmic-facing; that stretch reads GAQVSTQKTG…HVSRAFICLQ (1494 aa). Residues 568–584 are amphipathic alpha-helix; sequence FFQGPVEDAITAAIGRV. Catalysis depends on for protease 2A activity residues His-872 and Asp-890. Residues Cys-907 and Cys-909 each coordinate Zn(2+). Cys-961 acts as the For protease 2A activity in catalysis. Positions 967 and 969 each coordinate Zn(2+). The tract at residues 1101–1173 is membrane-binding; the sequence is NNSWLKKFTE…EQSAPSQSDQ (73 aa). Residues 1101-1239 are oligomerization; it reads NNSWLKKFTE…SPGAGKSVAT (139 aa). Residues 1122-1126 are RNA-binding; sequence AVKIQ. Positions 1205–1361 constitute an SF3 helicase domain; it reads EKKMSNYIQF…SMYSQNGKIN (157 aa). 3 residues coordinate Zn(2+): Cys-1369, Cys-1381, and Cys-1386. A C4-type; degenerate zinc finger spans residues 1369–1386; it reads CDDECCPVNFKKCCPLVC. The interval 1413-1420 is RNA-binding; sequence EYNHRHSV. The oligomerization stretch occupies residues 1424 to 1429; it reads LEALFQ. The stretch at 1496-1511 is an intramembrane region; sequence ALTTFVSVAGIIYIIY. Topologically, residues 1512–2185 are cytoplasmic; the sequence is KLFAGFQGAY…TLRRKWLDSF (674 aa). Tyr-1521 carries the post-translational modification O-(5'-phospho-RNA)-tyrosine. The 179-residue stretch at 1541–1719 folds into the Peptidase C3 domain; that stretch reads GPAFEFAVAM…FSAALLKHYF (179 aa). Active-site for protease 3C activity residues include His-1580, Glu-1611, and Cys-1687. Residues 1950 to 2066 enclose the RdRp catalytic domain; sequence GHLIAFDYSG…SYPWPIDASL (117 aa). Mg(2+) contacts are provided by Asp-1956 and Asp-2052.

This sequence belongs to the picornaviruses polyprotein family. Interacts with capsid protein VP1 and capsid protein VP3 to form heterotrimeric protomers. As to quaternary structure, interacts with capsid protein VP0, and capsid protein VP3 to form heterotrimeric protomers. Five protomers subsequently associate to form pentamers which serve as building blocks for the capsid. Interacts with capsid protein VP2, capsid protein VP3 and capsid protein VP4 following cleavage of capsid protein VP0. Interacts with host CD55. Interacts with host CXADR. In terms of assembly, interacts with capsid protein VP1 and capsid protein VP3 in the mature capsid. Interacts with capsid protein VP0 and capsid protein VP1 to form heterotrimeric protomers. Five protomers subsequently associate to form pentamers which serve as building blocks for the capsid. Interacts with capsid protein VP4 in the mature capsid. Interacts with protein 2C; this interaction may be important for virion morphogenesis. As to quaternary structure, interacts with capsid protein VP1 and capsid protein VP3. In terms of assembly, homodimer. Homohexamer; forms a hexameric ring structure with 6-fold symmetry characteristic of AAA+ ATPases. Interacts (via N-terminus) with host RTN3 (via reticulon domain); this interaction is important for viral replication. Interacts with capsid protein VP3; this interaction may be important for virion morphogenesis. As to quaternary structure, interacts with protein 3CD. In terms of assembly, homodimer. Interacts with host GBF1. Interacts (via GOLD domain) with host ACBD3 (via GOLD domain); this interaction allows the formation of a viral protein 3A/ACBD3 heterotetramer with a 2:2 stoichiometry, which will stimulate the recruitment of host PI4KB in order to synthesize PI4P at the viral RNA replication sites. Interacts with RNA-directed RNA polymerase. As to quaternary structure, interacts with host TICAM1 (via C-terminus). In terms of assembly, interacts with protein 3AB and with RNA-directed RNA polymerase. Interacts with Viral protein genome-linked and with protein 3CD. Mg(2+) serves as cofactor. Post-translationally, specific enzymatic cleavages in vivo by the viral proteases yield processing intermediates and the mature proteins. Myristoylation is required for the formation of pentamers during virus assembly. Further assembly of 12 pentamers and a molecule of genomic RNA generates the provirion. In terms of processing, during virion maturation, immature virions are rendered infectious following cleavage of VP0 into VP4 and VP2. This maturation seems to be an autocatalytic event triggered by the presence of RNA in the capsid and it is followed by a conformational change infectious virion. Post-translationally, myristoylation is required during RNA encapsidation and formation of the mature virus particle. VPg is uridylylated by the polymerase into VPg-pUpU. This acts as a nucleotide-peptide primer for the genomic RNA replication.

The protein localises to the virion. It localises to the host cytoplasm. The protein resides in the host cytoplasmic vesicle membrane. Its subcellular location is the host nucleus. It catalyses the reaction a ribonucleoside 5'-triphosphate + H2O = a ribonucleoside 5'-diphosphate + phosphate + H(+). It carries out the reaction Selective cleavage of Tyr-|-Gly bond in the picornavirus polyprotein.. The catalysed reaction is RNA(n) + a ribonucleoside 5'-triphosphate = RNA(n+1) + diphosphate. The enzyme catalyses Selective cleavage of Gln-|-Gly bond in the poliovirus polyprotein. In other picornavirus reactions Glu may be substituted for Gln, and Ser or Thr for Gly.. With respect to regulation, replication or transcription is subject to high level of random mutations by the nucleotide analog ribavirin. Functionally, forms an icosahedral capsid of pseudo T=3 symmetry with capsid proteins VP2 and VP3. The capsid is 300 Angstroms in diameter, composed of 60 copies of each capsid protein and enclosing the viral positive strand RNA genome. Capsid protein VP1 mainly forms the vertices of the capsid. Capsid protein VP1 interacts with host CD55 and CXADR to provide virion attachment to target host cells. This attachment induces virion internalization. Tyrosine kinases are probably involved in the entry process. After binding to its receptor, the capsid undergoes conformational changes. Capsid protein VP1 N-terminus (that contains an amphipathic alpha-helix) and capsid protein VP4 are externalized. Together, they shape a pore in the host membrane through which viral genome is translocated to host cell cytoplasm. In terms of biological role, forms an icosahedral capsid of pseudo T=3 symmetry with capsid proteins VP2 and VP3. The capsid is 300 Angstroms in diameter, composed of 60 copies of each capsid protein and enclosing the viral positive strand RNA genome. Its function is as follows. Lies on the inner surface of the capsid shell. After binding to the host receptor, the capsid undergoes conformational changes. Capsid protein VP4 is released, Capsid protein VP1 N-terminus is externalized, and together, they shape a pore in the host membrane through which the viral genome is translocated into the host cell cytoplasm. Component of immature procapsids, which is cleaved into capsid proteins VP4 and VP2 after maturation. Allows the capsid to remain inactive before the maturation step. Functionally, cysteine protease that cleaves viral polyprotein and specific host proteins. It is responsible for the autocatalytic cleavage between the P1 and P2 regions, which is the first cleavage occurring in the polyprotein. Also cleaves the host translation initiation factor EIF4G1, in order to shut down the capped cellular mRNA translation. Inhibits the host nucleus-cytoplasm protein and RNA trafficking by cleaving host members of the nuclear pores. Counteracts stress granule formation probably by antagonizing its assembly or promoting its dissassembly. Cleaves and inhibits host IFIH1/MDA5, thereby inhibiting the type-I IFN production and the establishment of the antiviral state. Cleaves and inhibits host MAVS, thereby inhibiting the type-I IFN production and the establishment of the antiviral state. In terms of biological role, plays an essential role in the virus replication cycle by acting as a viroporin. Creates a pore in the host endoplasmic reticulum and as a consequence releases Ca2+ in the cytoplasm of infected cell. In turn, high levels of cytoplasmic calcium may trigger membrane trafficking and transport of viral ER-associated proteins to viroplasms, sites of viral genome replication. Its function is as follows. Induces and associates with structural rearrangements of intracellular membranes. Displays RNA-binding, nucleotide binding and NTPase activities. May play a role in virion morphogenesis and viral RNA encapsidation by interacting with the capsid protein VP3. Localizes the viral replication complex to the surface of membranous vesicles. Together with protein 3CD binds the Cis-Active RNA Element (CRE) which is involved in RNA synthesis initiation. Acts as a cofactor to stimulate the activity of 3D polymerase, maybe through a nucleid acid chaperone activity. Functionally, localizes the viral replication complex to the surface of membranous vesicles. It inhibits host cell endoplasmic reticulum-to-Golgi apparatus transport and causes the disassembly of the Golgi complex, possibly through GBF1 interaction. This would result in depletion of MHC, trail receptors and IFN receptors at the host cell surface. Plays an essential role in viral RNA replication by recruiting ACBD3 and PI4KB at the viral replication sites, thereby allowing the formation of the rearranged membranous structures where viral replication takes place. In terms of biological role, acts as a primer for viral RNA replication and remains covalently bound to viral genomic RNA. VPg is uridylylated prior to priming replication into VPg-pUpU. The oriI viral genomic sequence may act as a template for this. The VPg-pUpU is then used as primer on the genomic RNA poly(A) by the RNA-dependent RNA polymerase to replicate the viral genome. During genome replication, the VPg-RNA linkage is removed by the host TDP2, thereby accelerating replication. During the late stage of the replication cycle, host TDP2 is excluded from sites of viral RNA synthesis and encapsidation, allowing for the generation of progeny virions. Its function is as follows. Involved in the viral replication complex and viral polypeptide maturation. It exhibits protease activity with a specificity and catalytic efficiency that is different from protease 3C. Protein 3CD lacks polymerase activity. Protein 3CD binds to the 5'UTR of the viral genome. Major viral protease that mediates proteolytic processing of the polyprotein. Cleaves host EIF5B, contributing to host translation shutoff. Cleaves also host PABPC1, contributing to host translation shutoff. Cleaves and inhibits host RIGI, thereby inhibiting the type-I IFN production and the establishment of the antiviral state. Cleaves and inhibits host MAVS, thereby inhibiting the type-I IFN production and the establishment of the antiviral state. Cleaves and inhibits host TICAM1/TRIF, thereby inhibiting the type-I IFN production. Cleaves host NLRP1, triggers host N-glycine-mediated degradation of the autoinhibitory NLRP1 N-terminal fragment. Cleaves host transcription factor TFEB, thereby disrupting host lysosomal functions and enhancing viral infection. Functionally, replicates the viral genomic RNA on the surface of intracellular membranes. May form linear arrays of subunits that propagate along a strong head-to-tail interaction called interface-I. Covalently attaches UMP to a tyrosine of VPg, which is used to prime RNA synthesis. The positive stranded RNA genome is first replicated at virus induced membranous vesicles, creating a dsRNA genomic replication form. This dsRNA is then used as template to synthesize positive stranded RNA genomes. ss(+)RNA genomes are either translated, replicated or encapsidated. The chain is Genome polyprotein from Coxsackievirus B3 (strain Nancy).